The chain runs to 118 residues: MLRTVLLSKIHRATVTGACLEYMGSISLDAQLLAAAHILAFEQVHVVNLNNGARLITYAIEATAGSGAVVLNGAAARLAAPGDRVIVLAYGQGTTEELENHQPRVVHVDTGNRIVACV.

The Schiff-base intermediate with substrate; via pyruvic acid role is filled by Ser-25. A Pyruvic acid (Ser) modification is found at Ser-25. Thr-57 is a binding site for substrate. The active-site Proton donor is the Tyr-58. 73-75 (GAA) contributes to the substrate binding site.

It belongs to the PanD family. Heterooctamer of four alpha and four beta subunits. Pyruvate serves as cofactor. Is synthesized initially as an inactive proenzyme, which is activated by self-cleavage at a specific serine bond to produce a beta-subunit with a hydroxyl group at its C-terminus and an alpha-subunit with a pyruvoyl group at its N-terminus.

It is found in the cytoplasm. It catalyses the reaction L-aspartate + H(+) = beta-alanine + CO2. It participates in cofactor biosynthesis; (R)-pantothenate biosynthesis; beta-alanine from L-aspartate: step 1/1. In terms of biological role, catalyzes the pyruvoyl-dependent decarboxylation of aspartate to produce beta-alanine. The polypeptide is Aspartate 1-decarboxylase 1 (Gloeobacter violaceus (strain ATCC 29082 / PCC 7421)).